The primary structure comprises 232 residues: Flagellar L-ring protein (232 aa).

The N-terminal stretch at M1–G21 is a signal peptide. C22 carries the N-palmitoyl cysteine lipid modification. A lipid anchor (S-diacylglycerol cysteine) is attached at C22.

It belongs to the FlgH family. As to quaternary structure, the basal body constitutes a major portion of the flagellar organelle and consists of four rings (L,P,S, and M) mounted on a central rod.

The protein localises to the cell outer membrane. It is found in the bacterial flagellum basal body. Its function is as follows. Assembles around the rod to form the L-ring and probably protects the motor/basal body from shearing forces during rotation. In Escherichia coli O7:K1 (strain IAI39 / ExPEC), this protein is Flagellar L-ring protein.